A 456-amino-acid polypeptide reads, in one-letter code: Bifunctional protein GlmU (456 aa).

Residues 1 to 228 (MPQNTLNIVI…SHLAAGVNNK (228 aa)) are pyrophosphorylase. UDP-N-acetyl-alpha-D-glucosamine-binding positions include 11 to 14 (LAAG), K25, Q75, 80 to 81 (GT), 102 to 104 (YGD), G138, E153, N168, and N226. A Mg(2+)-binding site is contributed by D104. A Mg(2+)-binding site is contributed by N226. The interval 229 to 249 (LQLAELERIFQTGQAQELLKA) is linker. The N-acetyltransferase stretch occupies residues 250-456 (GVTLHDPARF…GWVRPEKDKQ (207 aa)). Residues R332 and K350 each coordinate UDP-N-acetyl-alpha-D-glucosamine. H362 serves as the catalytic Proton acceptor. 2 residues coordinate UDP-N-acetyl-alpha-D-glucosamine: Y365 and N376. Acetyl-CoA-binding positions include A379, 385–386 (NY), S404, A422, and R439.

In the N-terminal section; belongs to the N-acetylglucosamine-1-phosphate uridyltransferase family. This sequence in the C-terminal section; belongs to the transferase hexapeptide repeat family. Homotrimer. Mg(2+) is required as a cofactor.

Its subcellular location is the cytoplasm. It catalyses the reaction alpha-D-glucosamine 1-phosphate + acetyl-CoA = N-acetyl-alpha-D-glucosamine 1-phosphate + CoA + H(+). It carries out the reaction N-acetyl-alpha-D-glucosamine 1-phosphate + UTP + H(+) = UDP-N-acetyl-alpha-D-glucosamine + diphosphate. It functions in the pathway nucleotide-sugar biosynthesis; UDP-N-acetyl-alpha-D-glucosamine biosynthesis; N-acetyl-alpha-D-glucosamine 1-phosphate from alpha-D-glucosamine 6-phosphate (route II): step 2/2. Its pathway is nucleotide-sugar biosynthesis; UDP-N-acetyl-alpha-D-glucosamine biosynthesis; UDP-N-acetyl-alpha-D-glucosamine from N-acetyl-alpha-D-glucosamine 1-phosphate: step 1/1. The protein operates within bacterial outer membrane biogenesis; LPS lipid A biosynthesis. Its function is as follows. Catalyzes the last two sequential reactions in the de novo biosynthetic pathway for UDP-N-acetylglucosamine (UDP-GlcNAc). The C-terminal domain catalyzes the transfer of acetyl group from acetyl coenzyme A to glucosamine-1-phosphate (GlcN-1-P) to produce N-acetylglucosamine-1-phosphate (GlcNAc-1-P), which is converted into UDP-GlcNAc by the transfer of uridine 5-monophosphate (from uridine 5-triphosphate), a reaction catalyzed by the N-terminal domain. This Neisseria meningitidis serogroup C (strain 053442) protein is Bifunctional protein GlmU.